The chain runs to 450 residues: MARKYFGTDGIRGKANIFPMTPDFAMKVGIAVGVLFRSKATSRRVVIGKDTRLSCYMLENALVAGFTAAGMDAFLLGPIPTPAVAMLCRSLRADIGVMISASHNAFYDNGIKLFGPDGFKLSDEKETKIEALLDSDISELPLANCEEIGRAKRVEGDIYRYIEYAKRTLPRDVRLDALRIVVDCANGATYKAAPRALWELGAEVIAINDEPNGFNINQECGSTDLTSLRNKVHEVRADVGIALDGDGDRVLMVDEKGQMIDGDQLIAVIAEHWHKTGRLHHKGIVTTVMSNLGLERFLSEKGLKLIRTDVGDRYVVDMMRQKKYNIGGESSGHIILSDFCTTGDGLVAALQVLACMKESQQPMSQLCKRFEPVPQILKNKVVHNKNVLQKSEVQAALTKASEHLGKEGRLLVRASGTEPVIRVMAEGDDRKAMTAIVDDLITLIARHDHD.

Catalysis depends on serine 102, which acts as the Phosphoserine intermediate. Mg(2+) is bound by residues serine 102, aspartate 244, aspartate 246, and aspartate 248. Position 102 is a phosphoserine (serine 102).

Belongs to the phosphohexose mutase family. It depends on Mg(2+) as a cofactor. In terms of processing, activated by phosphorylation.

The catalysed reaction is alpha-D-glucosamine 1-phosphate = D-glucosamine 6-phosphate. Its function is as follows. Catalyzes the conversion of glucosamine-6-phosphate to glucosamine-1-phosphate. This chain is Phosphoglucosamine mutase, found in Bartonella bacilliformis (strain ATCC 35685 / KC583 / Herrer 020/F12,63).